A 122-amino-acid polypeptide reads, in one-letter code: S-adenosylmethionine decarboxylase proenzyme (122 aa).

Ser-61 functions as the Schiff-base intermediate with substrate; via pyruvic acid in the catalytic mechanism. Ser-61 is modified (pyruvic acid (Ser); by autocatalysis). Residue His-66 is the Proton acceptor; for processing activity of the active site. The active-site Proton donor; for catalytic activity is Cys-81.

This sequence belongs to the prokaryotic AdoMetDC family. Type 1 subfamily. As to quaternary structure, heterotetramer of two alpha and two beta chains arranged as a dimer of alpha/beta heterodimers. The cofactor is pyruvate. Post-translationally, is synthesized initially as an inactive proenzyme. Formation of the active enzyme involves a self-maturation process in which the active site pyruvoyl group is generated from an internal serine residue via an autocatalytic post-translational modification. Two non-identical subunits are generated from the proenzyme in this reaction, and the pyruvate is formed at the N-terminus of the alpha chain, which is derived from the carboxyl end of the proenzyme. The post-translation cleavage follows an unusual pathway, termed non-hydrolytic serinolysis, in which the side chain hydroxyl group of the serine supplies its oxygen atom to form the C-terminus of the beta chain, while the remainder of the serine residue undergoes an oxidative deamination to produce ammonia and the pyruvoyl group blocking the N-terminus of the alpha chain.

It catalyses the reaction S-adenosyl-L-methionine + H(+) = S-adenosyl 3-(methylsulfanyl)propylamine + CO2. Its pathway is amine and polyamine biosynthesis; S-adenosylmethioninamine biosynthesis; S-adenosylmethioninamine from S-adenosyl-L-methionine: step 1/1. In terms of biological role, catalyzes the decarboxylation of S-adenosylmethionine to S-adenosylmethioninamine (dcAdoMet), the propylamine donor required for the synthesis of the polyamines spermine and spermidine from the diamine putrescine. This Prochlorococcus marinus (strain MIT 9211) protein is S-adenosylmethionine decarboxylase proenzyme.